Here is a 661-residue protein sequence, read N- to C-terminus: Ubiquitin carboxyl-terminal hydrolase 51 (661 aa).

The tract at residues 1–144 is disordered; the sequence is MRGTQGAQEM…SENSLLEVGS (144 aa). Over residues 21–30 the composition is skewed to polar residues; the sequence is TSENLTSRGS. Residues 53–71 show a composition bias toward basic residues; sequence PRRKPRPRPQPRSRSRGGR. The span at 75–96 shows a compositional bias: pro residues; the sequence is APPPPPAKPPPPPPAPPPPPLP. The UBP-type zinc finger occupies 149-267; it reads TGCCHVESFK…KETKEKILGL (119 aa). Residues Cys-151, His-153, Cys-192, Cys-195, Cys-205, Cys-208, Cys-213, His-218, His-222, His-228, Cys-241, and Cys-244 each coordinate Zn(2+). Residues 320–656 enclose the USP domain; the sequence is RGLINLGNTC…EGYLLFYHRQ (337 aa). Cys-329 serves as the catalytic Nucleophile. His-615 (proton acceptor) is an active-site residue.

It belongs to the peptidase C19 family. Interacts with H2A.

The protein localises to the chromosome. The catalysed reaction is Thiol-dependent hydrolysis of ester, thioester, amide, peptide and isopeptide bonds formed by the C-terminal Gly of ubiquitin (a 76-residue protein attached to proteins as an intracellular targeting signal).. Specifically deubiquitinates 'Lys-14' (H2AK13Ub) and 'Lys-16'(H2AK15Ub) of histone H2A regulating the DNA damage response at double-strand breaks (DSBs). USP51 is recruited to chromatin after DNA damage and regulates the dynamic assembly/disassembly of TP53BP1 and BRCA1. Functions in DNA double-strand break repair also by mediating the deubiquitination and subsequent stabilization of DGCR8, leading to the recruitment of DGCR8 binding partners to double strand breaks such as RNF168 or MDC1. In addition, promotes the deubiquitination and stabilization of the transcriptional repressor ZEB1. The sequence is that of Ubiquitin carboxyl-terminal hydrolase 51 from Mus musculus (Mouse).